The primary structure comprises 551 residues: Chaperonin GroEL (551 aa).

ATP-binding positions include 30 to 33, Lys-51, 87 to 91, Gly-415, 481 to 483, and Asp-497; these read TLGP, DGTTT, and NAA.

Belongs to the chaperonin (HSP60) family. As to quaternary structure, forms a cylinder of 14 subunits composed of two heptameric rings stacked back-to-back. Interacts with the co-chaperonin GroES.

The protein localises to the cytoplasm. It catalyses the reaction ATP + H2O + a folded polypeptide = ADP + phosphate + an unfolded polypeptide.. Its function is as follows. Together with its co-chaperonin GroES, plays an essential role in assisting protein folding. The GroEL-GroES system forms a nano-cage that allows encapsulation of the non-native substrate proteins and provides a physical environment optimized to promote and accelerate protein folding. This Magnetococcus marinus (strain ATCC BAA-1437 / JCM 17883 / MC-1) protein is Chaperonin GroEL.